Consider the following 142-residue polypeptide: Midkine-A (142 aa).

The signal sequence occupies residues Met-1–Gln-20. 5 cysteine pairs are disulfide-bonded: Cys-36–Cys-60, Cys-44–Cys-69, Cys-51–Cys-73, Cys-83–Cys-115, and Cys-93–Cys-125.

It belongs to the pleiotrophin family. In terms of tissue distribution, expression at the mid-gastrula stage begins in the neural anlage, and becomes increasingly prominent in the central nervous system and head mesenchyme during neurula stages. Although the mRNA is localized to the developing central nervous system (CNS), the protein is deposited at the neuromuscular junction (NMJ). In the tailbud stage embryo, expressed in the head and tail regions as well as in the CNS. In adults, expression is highest in the brain, eye and bone, with lower expression in the heart and lung. Not expressed in the ovary.

It is found in the secreted. Functionally, secreted protein that functions as a cytokine and growth factor and mediates its signal through cell-surface proteoglycan and non-proteoglycan receptors. Binds cell-surface proteoglycan receptors via their chondroitin sulfate (CS) groups. Thereby regulates many processes like inflammatory response, cell proliferation, cell adhesion, cell growth, cell survival, tissue regeneration, cell differentiation and cell migration. Inhibits mesoderm formation and promotes neural formation during development. Plays a role in development of the neuromuscular junction (NMJ). Has antibacterial activity against both Gram-positive and Gram-negative bacteria. The protein is Midkine-A (mdk-a) of Xenopus laevis (African clawed frog).